The following is a 295-amino-acid chain: Undecaprenyl-diphosphatase (295 aa).

The next 7 helical transmembrane spans lie at 12–34 (IAIAILQGATELFPVSSLGHAVV), 50–70 (FLPFLVFLHLGTAAALLLYFW), 95–115 (IFMLLVVATLPAIVVGGLLEH), 120–140 (LFESAPIAAFFLVVNGGLLLF), 209–229 (AHFSFLIALPIILGATVLEVP), 243–263 (TAALAAVAAGITAWLSTAFLM), and 272–292 (WALKPFAFYCIIAGLGALAWL).

The protein belongs to the UppP family.

It localises to the cell inner membrane. The enzyme catalyses di-trans,octa-cis-undecaprenyl diphosphate + H2O = di-trans,octa-cis-undecaprenyl phosphate + phosphate + H(+). In terms of biological role, catalyzes the dephosphorylation of undecaprenyl diphosphate (UPP). Confers resistance to bacitracin. The polypeptide is Undecaprenyl-diphosphatase (Granulibacter bethesdensis (strain ATCC BAA-1260 / CGDNIH1)).